Consider the following 692-residue polypeptide: Elongation factor G (692 aa).

Residues 8-283 enclose the tr-type G domain; sequence NRIRNIGIAA…AVIDYLPAPT (276 aa). Residues 17 to 24, 81 to 85, and 135 to 138 contribute to the GTP site; these read AHIDAGKT, DTPGH, and NKMD.

It belongs to the TRAFAC class translation factor GTPase superfamily. Classic translation factor GTPase family. EF-G/EF-2 subfamily.

Its subcellular location is the cytoplasm. Its function is as follows. Catalyzes the GTP-dependent ribosomal translocation step during translation elongation. During this step, the ribosome changes from the pre-translocational (PRE) to the post-translocational (POST) state as the newly formed A-site-bound peptidyl-tRNA and P-site-bound deacylated tRNA move to the P and E sites, respectively. Catalyzes the coordinated movement of the two tRNA molecules, the mRNA and conformational changes in the ribosome. This chain is Elongation factor G (fusA), found in Helicobacter pylori (strain J99 / ATCC 700824) (Campylobacter pylori J99).